The sequence spans 558 residues: Formate--tetrahydrofolate ligase (558 aa).

65 to 72 (TPAGEGKT) contributes to the ATP binding site.

It belongs to the formate--tetrahydrofolate ligase family.

It carries out the reaction (6S)-5,6,7,8-tetrahydrofolate + formate + ATP = (6R)-10-formyltetrahydrofolate + ADP + phosphate. It participates in one-carbon metabolism; tetrahydrofolate interconversion. This Methylobacterium sp. (strain 4-46) protein is Formate--tetrahydrofolate ligase.